Here is a 561-residue protein sequence, read N- to C-terminus: Eukaryotic translation initiation factor 3 subunit D-1 (561 aa).

A disordered region spans residues 98–164 (VQKPPHQRGR…RGPPPKMRES (67 aa)). A compositionally biased stretch (basic residues) spans 100–121 (KPPHQRGRFRNMRNSRSGRGRN). A Phosphothreonine modification is found at Thr-128. Residues 289–303 (EFDLLTVNETSVEPP) are RNA gate.

This sequence belongs to the eIF-3 subunit D family. Component of the eukaryotic translation initiation factor 3 (eIF-3) complex. The eIF-3 complex interacts with pix.

The protein localises to the cytoplasm. Functionally, mRNA cap-binding component of the eukaryotic translation initiation factor 3 (eIF-3) complex, which is involved in protein synthesis of a specialized repertoire of mRNAs and, together with other initiation factors, stimulates binding of mRNA and methionyl-tRNAi to the 40S ribosome. The eIF-3 complex specifically targets and initiates translation of a subset of mRNAs involved in cell proliferation. In the eIF-3 complex, eif3d specifically recognizes and binds the 7-methylguanosine cap of a subset of mRNAs. This chain is Eukaryotic translation initiation factor 3 subunit D-1, found in Drosophila ananassae (Fruit fly).